A 357-amino-acid chain; its full sequence is Membrane-bound lytic murein transglycosylase C (357 aa).

Positions 1–15 (MKKYLLLALLPFLYA) are cleaved as a signal peptide. Residue cysteine 16 is the site of N-palmitoyl cysteine attachment. Cysteine 16 carries the S-diacylglycerol cysteine lipid modification.

This sequence belongs to the transglycosylase Slt family.

It localises to the cell outer membrane. It carries out the reaction Exolytic cleavage of the (1-&gt;4)-beta-glycosidic linkage between N-acetylmuramic acid (MurNAc) and N-acetylglucosamine (GlcNAc) residues in peptidoglycan, from either the reducing or the non-reducing ends of the peptidoglycan chains, with concomitant formation of a 1,6-anhydrobond in the MurNAc residue.. Murein-degrading enzyme. May play a role in recycling of muropeptides during cell elongation and/or cell division. The polypeptide is Membrane-bound lytic murein transglycosylase C (Haemophilus influenzae (strain ATCC 51907 / DSM 11121 / KW20 / Rd)).